The primary structure comprises 207 residues: GTP cyclohydrolase-2 (207 aa).

Arginine 49–glutamate 53 is a GTP binding site. 3 residues coordinate Zn(2+): cysteine 54, cysteine 65, and cysteine 67. GTP is bound by residues glutamine 70, glutamate 92–arginine 94, and threonine 114. Aspartate 126 acts as the Proton acceptor in catalysis. Catalysis depends on arginine 128, which acts as the Nucleophile. Residues threonine 149 and lysine 154 each contribute to the GTP site.

The protein belongs to the GTP cyclohydrolase II family. The cofactor is Zn(2+).

It carries out the reaction GTP + 4 H2O = 2,5-diamino-6-hydroxy-4-(5-phosphoribosylamino)-pyrimidine + formate + 2 phosphate + 3 H(+). Its pathway is cofactor biosynthesis; riboflavin biosynthesis; 5-amino-6-(D-ribitylamino)uracil from GTP: step 1/4. In terms of biological role, catalyzes the conversion of GTP to 2,5-diamino-6-ribosylamino-4(3H)-pyrimidinone 5'-phosphate (DARP), formate and pyrophosphate. The polypeptide is GTP cyclohydrolase-2 (Hahella chejuensis (strain KCTC 2396)).